The chain runs to 226 residues: Transmembrane gamma-carboxyglutamic acid protein 4 (226 aa).

The N-terminal stretch at 1 to 17 is a signal peptide; the sequence is MFTLLVLLSQLPTVTLG. Positions 18–49 are excised as a propeptide; the sequence is FPHCARGPKASKHAGEEVFTSKEEANFFIHRR. Residues 50 to 113 lie on the Extracellular side of the membrane; that stretch reads LLYNRFDLEL…KSDGNREKID (64 aa). The 47-residue stretch at 52 to 98 folds into the Gla domain; that stretch reads YNRFDLELFTPGNLERECNEELCNYEEAREIFVDEDKTIAFWQEYSA. A disulfide bridge links cysteine 69 with cysteine 74. Residue glutamate 72 is modified to 4-carboxyglutamate. The chain crosses the membrane as a helical span at residues 114-134; the sequence is VMGLLTGLIAAGVFLVIFGLL. Residues 135–226 are Cytoplasmic-facing; the sequence is GYYLCITKCN…FKKSMSLPSH (92 aa). At serine 163 the chain carries Phosphoserine. Positions 186-189 match the LPXY motif; mediates binding to WW domain-containing proteins motif; the sequence is LPSY. A PPXY motif; mediates binding to WW domain-containing proteins motif is present at residues 204 to 207; it reads PPPY.

The protein belongs to the commissureless family. Interacts (via cytoplasmic domain) with WW domain-containing proteins MAGI1, MAGI3, NEDD4, NEDD4L, WWTR1/TAZ and YAP1. In terms of processing, gamma-carboxyglutamate residues are formed by vitamin K dependent carboxylation. These residues are essential for the binding of calcium. Widely expressed with highest levels in kidney.

The protein resides in the endoplasmic reticulum-Golgi intermediate compartment membrane. It localises to the cell membrane. In terms of biological role, may control axon guidance across the CNS. Prevents the delivery of ROBO1 at the cell surface and down-regulates its expression. The chain is Transmembrane gamma-carboxyglutamic acid protein 4 from Homo sapiens (Human).